The following is a 97-amino-acid chain: HssA/B-like protein 32 (97 aa).

Disordered regions lie at residues Met-1–Ser-23 and Ala-62–Ser-97. The span at Ala-62–Gly-74 shows a compositional bias: gly residues. The segment covering Ser-75–Gly-88 has biased composition (basic residues).

This sequence belongs to the hssA/B family.

The polypeptide is HssA/B-like protein 32 (hssl32) (Dictyostelium discoideum (Social amoeba)).